A 452-amino-acid polypeptide reads, in one-letter code: UPF0761 membrane protein Bpet3042 (452 aa).

6 consecutive transmembrane segments (helical) span residues 56-76 (VLGI…FPVF), 114-134 (LTAI…MTID), 153-173 (ALVY…SLWA), 195-215 (AISF…FVVV), 225-245 (ALVG…AFAY), and 259-279 (AFAT…AVLF).

Belongs to the UPF0761 family.

It localises to the cell inner membrane. This Bordetella petrii (strain ATCC BAA-461 / DSM 12804 / CCUG 43448) protein is UPF0761 membrane protein Bpet3042.